Consider the following 530-residue polypeptide: Glucocorticoid modulatory element-binding protein 2 (530 aa).

An SAND domain is found at 81-163 (EEGENLEAEI…RKIMDSGELD (83 aa)). C110 contacts Zn(2+). DNA-binding residues include K136, K140, K143, and R154. Residue K155 forms a Glycyl lysine isopeptide (Lys-Gly) (interchain with G-Cter in SUMO1); alternate linkage. K155 is covalently cross-linked (Glycyl lysine isopeptide (Lys-Gly) (interchain with G-Cter in SUMO2); alternate). Zn(2+)-binding residues include H167, C171, and C175. The stretch at 304–348 (QMDRSREQYARDLAALEQQCDEHRRRAKELKHKSQHLSNVLMTLT) forms a coiled coil. Residue S373 is modified to Phosphoserine.

As to quaternary structure, homodimer, and heterodimer of GMEB1 and GMEB2. GMEB1 and GMEB2 form the parvovirus initiator complex (PIF). Interacts with the glucocorticoid receptor (NR3C1). May interact with CREB-binding protein (CBP). Expressed in peripheral blood lymphocytes and fetal liver. Expressed preferentially in reproductive and/or developmentally important cells, such as testis, placenta, bone marrow and fetal tissues.

It is found in the nucleus. It localises to the cytoplasm. In terms of biological role, trans-acting factor that binds to glucocorticoid modulatory elements (GME) present in the TAT (tyrosine aminotransferase) promoter and increases sensitivity to low concentrations of glucocorticoids. Also binds to the transferrin receptor promoter. Essential auxiliary factor for the replication of parvoviruses. The polypeptide is Glucocorticoid modulatory element-binding protein 2 (GMEB2) (Homo sapiens (Human)).